The sequence spans 208 residues: Thymidylate kinase (208 aa).

ATP is bound at residue 10 to 17 (GPEGSGKT).

This sequence belongs to the thymidylate kinase family.

The catalysed reaction is dTMP + ATP = dTDP + ADP. In terms of biological role, phosphorylation of dTMP to form dTDP in both de novo and salvage pathways of dTTP synthesis. The protein is Thymidylate kinase of Bacillus cereus (strain ATCC 10987 / NRS 248).